A 419-amino-acid chain; its full sequence is Putative zinc metalloprotease spr0242 (419 aa).

His-18 contributes to the Zn(2+) binding site. Glu-19 is a catalytic residue. Residue His-22 coordinates Zn(2+). 3 consecutive transmembrane segments (helical) span residues 169-191 (LITN…WVLI), 345-367 (ILYF…IPAL), and 388-410 (EIET…AVTW).

Belongs to the peptidase M50B family. It depends on Zn(2+) as a cofactor.

The protein resides in the cell membrane. The protein is Putative zinc metalloprotease spr0242 of Streptococcus pneumoniae (strain ATCC BAA-255 / R6).